The primary structure comprises 479 residues: Ribulose bisphosphate carboxylase large chain 2 (479 aa).

2 residues coordinate substrate: Asn116 and Thr166. Lys168 serves as the catalytic Proton acceptor. A substrate-binding site is contributed by Lys170. Lys194, Asp196, and Glu197 together coordinate Mg(2+). The residue at position 194 (Lys194) is an N6-carboxylysine. Catalysis depends on His287, which acts as the Proton acceptor. Residues Arg288, His320, and Ser372 each coordinate substrate.

This sequence belongs to the RuBisCO large chain family. Type I subfamily. In terms of assembly, heterohexadecamer of 8 large chains and 8 small chains. It depends on Mg(2+) as a cofactor.

The enzyme catalyses 2 (2R)-3-phosphoglycerate + 2 H(+) = D-ribulose 1,5-bisphosphate + CO2 + H2O. It carries out the reaction D-ribulose 1,5-bisphosphate + O2 = 2-phosphoglycolate + (2R)-3-phosphoglycerate + 2 H(+). Functionally, ruBisCO catalyzes two reactions: the carboxylation of D-ribulose 1,5-bisphosphate, the primary event in carbon dioxide fixation, as well as the oxidative fragmentation of the pentose substrate. Both reactions occur simultaneously and in competition at the same active site. The protein is Ribulose bisphosphate carboxylase large chain 2 of Bradyrhizobium sp. (strain BTAi1 / ATCC BAA-1182).